We begin with the raw amino-acid sequence, 574 residues long: Acetolactate synthase large subunit (574 aa).

Glu-51 contacts thiamine diphosphate. FAD is bound by residues Arg-153, 261–282 (HGTYEANMAMHYADVILAIGVR), and 304–323 (DIDPTSISKTITAHIPIVGN). Residues 397–477 (QHQMFAALYY…ILILNLNNKS (81 aa)) are thiamine pyrophosphate binding. Mg(2+) contacts are provided by Asp-448 and Asn-475.

Belongs to the TPP enzyme family. In terms of assembly, dimer of large and small chains. Requires Mg(2+) as cofactor. It depends on thiamine diphosphate as a cofactor.

The enzyme catalyses 2 pyruvate + H(+) = (2S)-2-acetolactate + CO2. It functions in the pathway amino-acid biosynthesis; L-isoleucine biosynthesis; L-isoleucine from 2-oxobutanoate: step 1/4. The protein operates within amino-acid biosynthesis; L-valine biosynthesis; L-valine from pyruvate: step 1/4. In Buchnera aphidicola subsp. Schlechtendalia chinensis, this protein is Acetolactate synthase large subunit (ilvI).